We begin with the raw amino-acid sequence, 378 residues long: Polygalacturonase (378 aa).

A signal peptide spans Met1 to Ala20. A disulfide bridge connects residues Cys39 and Cys57. 5 PbH1 repeats span residues Ser172–Asp203, Ser204–Ser225, Gly226–Ser246, Val255–Ala276, and Ile284–Gln306. Residue Asp218 is the Proton donor of the active site. Residues Cys220 and Cys236 are joined by a disulfide bond. The active site involves His240. 2 disulfides stabilise this stretch: Cys346–Cys352 and Cys370–Cys378.

Belongs to the glycosyl hydrolase 28 family.

It localises to the secreted. The enzyme catalyses (1,4-alpha-D-galacturonosyl)n+m + H2O = (1,4-alpha-D-galacturonosyl)n + (1,4-alpha-D-galacturonosyl)m.. The polypeptide is Polygalacturonase (PEPG1) (Penicillium expansum (Blue mold rot fungus)).